A 105-amino-acid chain; its full sequence is Met repressor (105 aa).

Belongs to the MetJ family. Homodimer.

It localises to the cytoplasm. In terms of biological role, this regulatory protein, when combined with SAM (S-adenosylmethionine) represses the expression of the methionine regulon and of enzymes involved in SAM synthesis. The protein is Met repressor of Pectobacterium carotovorum subsp. carotovorum (strain PC1).